Consider the following 131-residue polypeptide: Small ribosomal subunit protein uS11 (131 aa).

It belongs to the universal ribosomal protein uS11 family. Part of the 30S ribosomal subunit. Interacts with proteins S7 and S18. Binds to IF-3.

Its function is as follows. Located on the platform of the 30S subunit, it bridges several disparate RNA helices of the 16S rRNA. Forms part of the Shine-Dalgarno cleft in the 70S ribosome. This chain is Small ribosomal subunit protein uS11, found in Helicobacter pylori (strain Shi470).